Here is a 276-residue protein sequence, read N- to C-terminus: MSVIKCNPTSPGRRHVVKLVNGGLYKGKPYSSLLSKKVANSSKGRNNYGRITMRHIGSGHKQRYRIIDFKRNKDDVFAVVERMEYDPNRSANIALIVYKDGERRYILAPRNLNVGNKIISGLNVPISPGNSLPLSNIPVGSIIHNVEMKVGKGGQLARSAGTYVQIVSRDGEYIILRLRSGEIRKVRCECRATIGEVGNNEHMLRALGKAGASRWRGIRPTVRGTAMNPIDHPHGGGEGKNFGKHPVSPWGVQTKGKRTRSNKRTDKFILCRRKKK.

Residues 224 to 265 (GTAMNPIDHPHGGGEGKNFGKHPVSPWGVQTKGKRTRSNKRT) are disordered.

It belongs to the universal ribosomal protein uL2 family. As to quaternary structure, part of the 50S ribosomal subunit. Forms a bridge to the 30S subunit in the 70S ribosome.

In terms of biological role, one of the primary rRNA binding proteins. Required for association of the 30S and 50S subunits to form the 70S ribosome, for tRNA binding and peptide bond formation. It has been suggested to have peptidyltransferase activity; this is somewhat controversial. Makes several contacts with the 16S rRNA in the 70S ribosome. The sequence is that of Large ribosomal subunit protein uL2 from Blochmanniella floridana.